The sequence spans 350 residues: Protein-glutamate methylesterase/protein-glutamine glutaminase 2 (350 aa).

The region spanning 3-121 is the Response regulatory domain; the sequence is RVLLVDDSPV…DPDYEEAVSE (119 aa). Asp-54 carries the post-translational modification 4-aspartylphosphate. Residues 158-322 form the CheB-type methylesterase domain; sequence IHQDIRVIVI…SFVYGMPGAA (165 aa). Catalysis depends on residues Ser-170, His-197, and Asp-290.

Belongs to the CheB family. In terms of processing, phosphorylated by CheA. Phosphorylation of the N-terminal regulatory domain activates the methylesterase activity.

Its subcellular location is the cytoplasm. It catalyses the reaction [protein]-L-glutamate 5-O-methyl ester + H2O = L-glutamyl-[protein] + methanol + H(+). The catalysed reaction is L-glutaminyl-[protein] + H2O = L-glutamyl-[protein] + NH4(+). Its function is as follows. Involved in chemotaxis. Part of a chemotaxis signal transduction system that modulates chemotaxis in response to various stimuli. Catalyzes the demethylation of specific methylglutamate residues introduced into the chemoreceptors (methyl-accepting chemotaxis proteins or MCP) by CheR. Also mediates the irreversible deamidation of specific glutamine residues to glutamic acid. The protein is Protein-glutamate methylesterase/protein-glutamine glutaminase 2 of Methanospirillum hungatei JF-1 (strain ATCC 27890 / DSM 864 / NBRC 100397 / JF-1).